Consider the following 406-residue polypeptide: Nuclear hormone receptor family member nhr-133 (406 aa).

The segment at residues 8–83 (SGPCEICEQP…VGMNSSKFQN (76 aa)) is a DNA-binding region (nuclear receptor). The segment at 11-31 (CEICEQPAHGNHFGVLSCRAC) adopts an NR C4-type zinc-finger fold. Residues 47–66 (DRVCRKGNCIGNDLYRCKIC) form an NR C4-type; degenerate zinc finger. The NR LBD domain maps to 150–406 (YSWSPNHYPN…YSHPEMFEFS (257 aa)).

Belongs to the nuclear hormone receptor family.

It is found in the nucleus. Its function is as follows. Orphan nuclear receptor. The sequence is that of Nuclear hormone receptor family member nhr-133 from Caenorhabditis elegans.